Reading from the N-terminus, the 300-residue chain is N-acetylmannosamine kinase (300 aa).

ATP contacts are provided by residues 5-12 and 132-139; these read ALDIGGTK and GVGGGIVL. Zn(2+) contacts are provided by His-156, Cys-166, Cys-168, and Cys-173.

The protein belongs to the ROK (NagC/XylR) family. NanK subfamily. As to quaternary structure, homodimer.

The enzyme catalyses an N-acyl-D-mannosamine + ATP = an N-acyl-D-mannosamine 6-phosphate + ADP + H(+). Its pathway is amino-sugar metabolism; N-acetylneuraminate degradation; D-fructose 6-phosphate from N-acetylneuraminate: step 2/5. Functionally, catalyzes the phosphorylation of N-acetylmannosamine (ManNAc) to ManNAc-6-P. The chain is N-acetylmannosamine kinase from Haemophilus influenzae (strain PittGG).